Reading from the N-terminus, the 430-residue chain is Gamma-glutamyl phosphate reductase (430 aa).

Belongs to the gamma-glutamyl phosphate reductase family.

The protein resides in the cytoplasm. The enzyme catalyses L-glutamate 5-semialdehyde + phosphate + NADP(+) = L-glutamyl 5-phosphate + NADPH + H(+). Its pathway is amino-acid biosynthesis; L-proline biosynthesis; L-glutamate 5-semialdehyde from L-glutamate: step 2/2. Its function is as follows. Catalyzes the NADPH-dependent reduction of L-glutamate 5-phosphate into L-glutamate 5-semialdehyde and phosphate. The product spontaneously undergoes cyclization to form 1-pyrroline-5-carboxylate. This is Gamma-glutamyl phosphate reductase from Rhodopseudomonas palustris (strain BisA53).